Here is a 300-residue protein sequence, read N- to C-terminus: Tubulin polyglutamylase complex subunit 2 (300 aa).

The segment at 257–300 (KIVIPKKKGPVQPAGGQKGPSGPSGPSTSSTSKSSSGSGNPTRK) is disordered. Over residues 276-300 (PSGPSGPSTSSTSKSSSGSGNPTRK) the composition is skewed to low complexity.

Part of the neuronal tubulin polyglutamylase complex which contains TPGS1, TPGS2, TTLL1, LRRC49 and NICN1. Interacts with CSTPP1 and LRRC49.

Its subcellular location is the cytoplasm. The protein localises to the cytoskeleton. It is found in the microtubule organizing center. The protein resides in the centrosome. It localises to the centriolar satellite. In terms of biological role, subunit of the tubulin polyglutamylase complex (TPGC). The complex mediates cilia and flagella polyglutamylation which is essential for their biogenesis and motility. The chain is Tubulin polyglutamylase complex subunit 2 (TPGS2) from Homo sapiens (Human).